Consider the following 142-residue polypeptide: Large ribosomal subunit protein uL13 (142 aa).

The protein belongs to the universal ribosomal protein uL13 family. As to quaternary structure, part of the 50S ribosomal subunit.

Its function is as follows. This protein is one of the early assembly proteins of the 50S ribosomal subunit, although it is not seen to bind rRNA by itself. It is important during the early stages of 50S assembly. This is Large ribosomal subunit protein uL13 from Methanosphaera stadtmanae (strain ATCC 43021 / DSM 3091 / JCM 11832 / MCB-3).